The chain runs to 64 residues: Large ribosomal subunit protein bL28 (64 aa).

Residues 1–27 (MAKRDQLTGKGPLSGNTRSHAMNHSKR) form a disordered region.

It belongs to the bacterial ribosomal protein bL28 family.

The sequence is that of Large ribosomal subunit protein bL28 from Ureaplasma parvum serovar 3 (strain ATCC 27815 / 27 / NCTC 11736).